The chain runs to 208 residues: ATP-dependent Clp protease proteolytic subunit (208 aa).

The Nucleophile role is filled by Ser-106. Residue His-131 is part of the active site.

The protein belongs to the peptidase S14 family. As to quaternary structure, fourteen ClpP subunits assemble into 2 heptameric rings which stack back to back to give a disk-like structure with a central cavity, resembling the structure of eukaryotic proteasomes.

It is found in the cytoplasm. It catalyses the reaction Hydrolysis of proteins to small peptides in the presence of ATP and magnesium. alpha-casein is the usual test substrate. In the absence of ATP, only oligopeptides shorter than five residues are hydrolyzed (such as succinyl-Leu-Tyr-|-NHMec, and Leu-Tyr-Leu-|-Tyr-Trp, in which cleavage of the -Tyr-|-Leu- and -Tyr-|-Trp bonds also occurs).. Functionally, cleaves peptides in various proteins in a process that requires ATP hydrolysis. Has a chymotrypsin-like activity. Plays a major role in the degradation of misfolded proteins. This Caulobacter sp. (strain K31) protein is ATP-dependent Clp protease proteolytic subunit.